The following is a 176-amino-acid chain: Methylmalonyl-CoA epimerase, mitochondrial (176 aa).

The transit peptide at 1 to 36 (MARVLKAAAANAVGLFSRLQAPIPTVRASSTSQPLD) directs the protein to the mitochondrion. The VOC domain occupies 47-176 (RLNHVAIAVP…GGVLVELEQA (130 aa)). His50 lines the Co(2+) pocket. Residue Lys114 is modified to N6-succinyllysine. His122 serves as a coordination point for Co(2+). Lys150 is subject to N6-acetyllysine; alternate. Lys150 is modified (N6-succinyllysine; alternate). Glu172 is a Co(2+) binding site.

It belongs to the methylmalonyl-CoA epimerase family.

The protein localises to the mitochondrion. It carries out the reaction (R)-methylmalonyl-CoA = (S)-methylmalonyl-CoA. Functionally, methylmalonyl-CoA epimerase involved in propionyl-CoA metabolism. The chain is Methylmalonyl-CoA epimerase, mitochondrial from Homo sapiens (Human).